Reading from the N-terminus, the 45-residue chain is Putative potassium channel blocker (45 aa).

In terms of tissue distribution, expressed by the venom gland.

It is found in the secreted. Inhibits potassium channels. The protein is Putative potassium channel blocker of Hottentotta tamulus (Eastern Indian scorpion).